The chain runs to 440 residues: Probable aldose 1-epimerase ARB_05372 (440 aa).

The first 24 residues, 1-24 (MCGVLRQLMLLLLAFLSITPSCSA), serve as a signal peptide directing secretion. N32, N38, N43, N68, and N112 each carry an N-linked (GlcNAc...) asparagine glycan. 125-126 (NR) contacts substrate. N-linked (GlcNAc...) asparagine glycans are attached at residues N129, N147, N163, N171, and N199. H233 functions as the Proton donor in the catalytic mechanism. N243, N275, N281, and N306 each carry an N-linked (GlcNAc...) asparagine glycan. D311 provides a ligand contact to substrate. 4 N-linked (GlcNAc...) asparagine glycosylation sites follow: N321, N337, N365, and N385. Catalysis depends on E401, which acts as the Proton acceptor.

Belongs to the aldose epimerase family. In terms of assembly, monomer.

The protein localises to the secreted. The enzyme catalyses alpha-D-glucose = beta-D-glucose. It participates in carbohydrate metabolism; hexose metabolism. Its function is as follows. Mutarotase converts alpha-aldose to the beta-anomer. It is active on D-glucose, L-arabinose, D-xylose, D-galactose, maltose and lactose. The polypeptide is Probable aldose 1-epimerase ARB_05372 (Arthroderma benhamiae (strain ATCC MYA-4681 / CBS 112371) (Trichophyton mentagrophytes)).